The primary structure comprises 186 residues: Probable chorismate pyruvate-lyase (186 aa).

Substrate is bound by residues R80, L118, and E170.

The protein belongs to the UbiC family.

It is found in the cytoplasm. It carries out the reaction chorismate = 4-hydroxybenzoate + pyruvate. Its pathway is cofactor biosynthesis; ubiquinone biosynthesis. Functionally, removes the pyruvyl group from chorismate, with concomitant aromatization of the ring, to provide 4-hydroxybenzoate (4HB) for the ubiquinone pathway. The protein is Probable chorismate pyruvate-lyase of Pseudomonas savastanoi pv. phaseolicola (strain 1448A / Race 6) (Pseudomonas syringae pv. phaseolicola (strain 1448A / Race 6)).